The chain runs to 391 residues: F-box/kelch-repeat protein At4g05080 (391 aa).

Positions 2–49 constitute an F-box domain; sequence TMMFDLTQDLVKEILSRVPITSLGAVRSTCKGWNALSKDRILCKAKPK. Kelch repeat units follow at residues 100 to 143 and 144 to 194; these read HMYY…TFCL and RYDN…SASV. A compositionally biased stretch (basic residues) spans 369 to 385; it reads RRRRERNSKRKEKKRKG. The interval 369 to 391 is disordered; that stretch reads RRRRERNSKRKEKKRKGTTNNKV.

The sequence is that of F-box/kelch-repeat protein At4g05080 from Arabidopsis thaliana (Mouse-ear cress).